Here is a 467-residue protein sequence, read N- to C-terminus: Pentatricopeptide repeat-containing protein At1g77170, mitochondrial (467 aa).

The N-terminal 30 residues, Met-1–Phe-30, are a transit peptide targeting the mitochondrion. PPR repeat units lie at residues Ile-81–Pro-115, Asp-116–Gly-150, Asp-151–Arg-181, Lys-182–Pro-216, Asp-217–Glu-251, Asp-254–Arg-284, Asn-285–Pro-319, Asn-320–Glu-350, and Gly-356–Lys-386. The segment at Val-391–Thr-466 is type E motif.

This sequence belongs to the PPR family. PCMP-E subfamily.

Its subcellular location is the mitochondrion. The chain is Pentatricopeptide repeat-containing protein At1g77170, mitochondrial (PCMP-E21) from Arabidopsis thaliana (Mouse-ear cress).